Here is a 147-residue protein sequence, read N- to C-terminus: UPF0178 protein VP2328 (147 aa).

Belongs to the UPF0178 family.

This chain is UPF0178 protein VP2328, found in Vibrio parahaemolyticus serotype O3:K6 (strain RIMD 2210633).